The following is a 101-amino-acid chain: UPF0213 protein VC_A0739 (101 aa).

The GIY-YIG domain maps to 9-85; sequence SPWFVYLVRC…KALSKSQKEA (77 aa).

It belongs to the UPF0213 family.

The polypeptide is UPF0213 protein VC_A0739 (Vibrio cholerae serotype O1 (strain ATCC 39315 / El Tor Inaba N16961)).